A 115-amino-acid polypeptide reads, in one-letter code: NADH-ubiquinone oxidoreductase chain 3 (115 aa).

3 helical membrane passes run 5-25, 55-75, and 86-106; these read LTFM…FWLP, FFLV…LLPL, and LMLT…AYEW.

Belongs to the complex I subunit 3 family. Core subunit of respiratory chain NADH dehydrogenase (Complex I) which is composed of 45 different subunits. Interacts with TMEM186. Interacts with TMEM242.

It localises to the mitochondrion inner membrane. The catalysed reaction is a ubiquinone + NADH + 5 H(+)(in) = a ubiquinol + NAD(+) + 4 H(+)(out). Its function is as follows. Core subunit of the mitochondrial membrane respiratory chain NADH dehydrogenase (Complex I) which catalyzes electron transfer from NADH through the respiratory chain, using ubiquinone as an electron acceptor. Essential for the catalytic activity of complex I. The protein is NADH-ubiquinone oxidoreductase chain 3 of Avahi unicolor (Sambirano woolly lemur).